A 325-amino-acid chain; its full sequence is Ferrochelatase (325 aa).

Fe cation-binding residues include H195 and E276.

It belongs to the ferrochelatase family.

The protein localises to the cytoplasm. The enzyme catalyses heme b + 2 H(+) = protoporphyrin IX + Fe(2+). It participates in porphyrin-containing compound metabolism; protoheme biosynthesis; protoheme from protoporphyrin-IX: step 1/1. Catalyzes the ferrous insertion into protoporphyrin IX. The polypeptide is Ferrochelatase (Methylococcus capsulatus (strain ATCC 33009 / NCIMB 11132 / Bath)).